The sequence spans 438 residues: Minor myo-inositol transporter IolF (438 aa).

A run of 12 helical transmembrane segments spans residues 15-35 (IAAA…SAGL), 49-69 (IGLL…ALLG), 86-106 (MLVY…PMLL), 108-128 (GYII…TIIA), 147-167 (WAAG…LGLL), 171-191 (IVFA…IRLP), 230-250 (ILFL…MGFF), 268-288 (LLQM…FMPF), 295-312 (TVFG…TLFL), 317-334 (GLPI…NNGA), 359-379 (LMFF…PMII), and 387-407 (MAAI…LFAP).

This sequence belongs to the major facilitator superfamily. Sugar transporter (TC 2.A.1.1) family.

The protein localises to the cell membrane. It functions in the pathway polyol metabolism; myo-inositol degradation into acetyl-CoA. Minor myo-inositol uptake transporter. The protein is Minor myo-inositol transporter IolF (iolF) of Bacillus subtilis (strain 168).